A 245-amino-acid chain; its full sequence is MPYRKYREKKYETKYREAFKVFQEKIGITFTDEKLLIQAFTHSSYVNEHRKKPHEDNERLEFLGDAVLELTVSQYLFQKYPTMSEGELTKLRAAIVCEPSLVRFANELSFGSLVLLGKGEEMTGGRERPALLADVFEAFIGALYLDQGLETVWGFLKEIVYPKINEGAFSHVMDYKSQLQELIQRDGSGNIEYQILQEKGPAHNREFVSRVTLNNVALGLGSGKSKKEAEQQAAAEALKKLKEQL.

One can recognise an RNase III domain in the interval 19-148 (FKVFQEKIGI…FIGALYLDQG (130 aa)). Position 61 (Glu61) interacts with Mg(2+). Residue Asp65 is part of the active site. Mg(2+) is bound by residues Asp134 and Glu137. Glu137 is an active-site residue. Residues 174 to 243 (DYKSQLQELI…AAEALKKLKE (70 aa)) enclose the DRBM domain.

This sequence belongs to the ribonuclease III family. Homodimer. Mg(2+) serves as cofactor.

The protein resides in the cytoplasm. It catalyses the reaction Endonucleolytic cleavage to 5'-phosphomonoester.. Digests double-stranded RNA. Involved in the processing of primary rRNA transcript to yield the immediate precursors to the large and small rRNAs (23S and 16S). Processes some mRNAs, and tRNAs when they are encoded in the rRNA operon. Processes pre-crRNA and tracrRNA of type II CRISPR loci if present in the organism. In Bacillus cereus (strain AH187), this protein is Ribonuclease 3.